The sequence spans 185 residues: Ribosome-recycling factor (185 aa).

A disordered region spans residues 137 to 158 (DELKKLEKDHTASEDEVKRAQD).

The protein belongs to the RRF family.

The protein resides in the cytoplasm. Its function is as follows. Responsible for the release of ribosomes from messenger RNA at the termination of protein biosynthesis. May increase the efficiency of translation by recycling ribosomes from one round of translation to another. The sequence is that of Ribosome-recycling factor from Desulfitobacterium hafniense (strain Y51).